The sequence spans 331 residues: PTS-dependent dihydroxyacetone kinase 2, dihydroxyacetone-binding subunit DhaK (331 aa).

Residues 7 to 328 (DGYEAVEEML…LDTPCDTPYF (322 aa)) form the DhaK domain. Dihydroxyacetone is bound by residues 55-58 (GSGH) and Asp-111. His-58 (proton acceptor) is an active-site residue. His-218 functions as the Tele-hemiaminal-histidine intermediate in the catalytic mechanism.

Homodimer. The dihydroxyacetone kinase complex is composed of a homodimer of DhaM, a homodimer of DhaK and the subunit DhaL.

The protein localises to the cytoplasm. The catalysed reaction is dihydroxyacetone + phosphoenolpyruvate = dihydroxyacetone phosphate + pyruvate. Its pathway is polyol metabolism; glycerol degradation. Dihydroxyacetone binding subunit of the dihydroxyacetone kinase, which is responsible for the phosphoenolpyruvate (PEP)-dependent phosphorylation of dihydroxyacetone via a phosphoryl group transfer from DhaL-ATP. The polypeptide is PTS-dependent dihydroxyacetone kinase 2, dihydroxyacetone-binding subunit DhaK (Listeria innocua serovar 6a (strain ATCC BAA-680 / CLIP 11262)).